Consider the following 62-residue polypeptide: Conotoxin Pn-B0151 (62 aa).

The signal sequence occupies residues 1-22 (MRCLPVFVILLLLIASTPSVDA). Residues 23 to 48 (LQKTKDDMPLASFHDNVKRILQTLSN) constitute a propeptide that is removed on maturation.

Belongs to the conotoxin T superfamily. Post-translationally, contains 2 disulfide bonds that can be either 'C1-C3, C2-C4' or 'C1-C4, C2-C3', since these disulfide connectivities have been observed for conotoxins with cysteine framework V (for examples, see AC P0DQQ7 and AC P81755). Expressed by the venom duct.

It localises to the secreted. In Conus pennaceus (Feathered cone), this protein is Conotoxin Pn-B0151.